Consider the following 215-residue polypeptide: Urease accessory protein UreG (215 aa).

24-31 contributes to the GTP binding site; the sequence is GPVGSGKT.

This sequence belongs to the SIMIBI class G3E GTPase family. UreG subfamily. In terms of assembly, homodimer. UreD, UreF and UreG form a complex that acts as a GTP-hydrolysis-dependent molecular chaperone, activating the urease apoprotein by helping to assemble the nickel containing metallocenter of UreC. The UreE protein probably delivers the nickel.

The protein localises to the cytoplasm. In terms of biological role, facilitates the functional incorporation of the urease nickel metallocenter. This process requires GTP hydrolysis, probably effectuated by UreG. This is Urease accessory protein UreG from Burkholderia cenocepacia (strain HI2424).